The primary structure comprises 519 residues: 2,3-bisphosphoglycerate-independent phosphoglycerate mutase (519 aa).

Residues D9 and S60 each coordinate Mn(2+). Residue S60 is the Phosphoserine intermediate of the active site. Residues 76 to 91 (DSARVSDSIARSRGEA) are compositionally biased toward basic and acidic residues. The segment at 76–102 (DSARVSDSIARSRGEAPPDDDAQDPPF) is disordered. Substrate contacts are provided by residues H134, 163–164 (RD), R195, R201, 267–270 (RSDR), and K341. Mn(2+) contacts are provided by D408, H412, D449, H450, and H466.

This sequence belongs to the BPG-independent phosphoglycerate mutase family. Mn(2+) serves as cofactor.

It catalyses the reaction (2R)-2-phosphoglycerate = (2R)-3-phosphoglycerate. It participates in carbohydrate degradation; glycolysis; pyruvate from D-glyceraldehyde 3-phosphate: step 3/5. In terms of biological role, catalyzes the interconversion of 2-phosphoglycerate and 3-phosphoglycerate. This is 2,3-bisphosphoglycerate-independent phosphoglycerate mutase from Haloarcula marismortui (strain ATCC 43049 / DSM 3752 / JCM 8966 / VKM B-1809) (Halobacterium marismortui).